Consider the following 225-residue polypeptide: Uridylate kinase (225 aa).

Residue 9–10 (GS) coordinates ATP. G46 is a binding site for UMP. G47 and R51 together coordinate ATP. Residues D67 and 115–121 (THPAHTT) each bind UMP. ATP is bound by residues T141, N142, Y147, and D150.

This sequence belongs to the UMP kinase family. As to quaternary structure, homohexamer.

Its subcellular location is the cytoplasm. It carries out the reaction UMP + ATP = UDP + ADP. It functions in the pathway pyrimidine metabolism; CTP biosynthesis via de novo pathway; UDP from UMP (UMPK route): step 1/1. With respect to regulation, inhibited by UTP. Functionally, catalyzes the reversible phosphorylation of UMP to UDP. This Methanococcus maripaludis (strain C5 / ATCC BAA-1333) protein is Uridylate kinase.